We begin with the raw amino-acid sequence, 335 residues long: Anthranilate phosphoribosyltransferase (335 aa).

5-phospho-alpha-D-ribose 1-diphosphate-binding positions include G79, 82–83, T87, 89–92, 107–115, and S119; these read GD, NIST, and KHGSRSVSS. G79 contacts anthranilate. A Mg(2+)-binding site is contributed by S91. R165 is a binding site for anthranilate. Mg(2+) contacts are provided by D223 and E224.

Belongs to the anthranilate phosphoribosyltransferase family. As to quaternary structure, homodimer. Mg(2+) is required as a cofactor.

The catalysed reaction is N-(5-phospho-beta-D-ribosyl)anthranilate + diphosphate = 5-phospho-alpha-D-ribose 1-diphosphate + anthranilate. It functions in the pathway amino-acid biosynthesis; L-tryptophan biosynthesis; L-tryptophan from chorismate: step 2/5. Its function is as follows. Catalyzes the transfer of the phosphoribosyl group of 5-phosphorylribose-1-pyrophosphate (PRPP) to anthranilate to yield N-(5'-phosphoribosyl)-anthranilate (PRA). This chain is Anthranilate phosphoribosyltransferase, found in Helicobacter pylori (strain G27).